The following is a 513-amino-acid chain: 2-isopropylmalate synthase (513 aa).

Positions Ile-4 to Tyr-268 constitute a Pyruvate carboxyltransferase domain. Positions 13, 203, 205, and 239 each coordinate Mn(2+). A regulatory domain region spans residues Arg-392 to Glu-513.

Belongs to the alpha-IPM synthase/homocitrate synthase family. LeuA type 1 subfamily. As to quaternary structure, homodimer. It depends on Mn(2+) as a cofactor.

The protein localises to the cytoplasm. The enzyme catalyses 3-methyl-2-oxobutanoate + acetyl-CoA + H2O = (2S)-2-isopropylmalate + CoA + H(+). It functions in the pathway amino-acid biosynthesis; L-leucine biosynthesis; L-leucine from 3-methyl-2-oxobutanoate: step 1/4. Its function is as follows. Catalyzes the condensation of the acetyl group of acetyl-CoA with 3-methyl-2-oxobutanoate (2-ketoisovalerate) to form 3-carboxy-3-hydroxy-4-methylpentanoate (2-isopropylmalate). The sequence is that of 2-isopropylmalate synthase from Thermotoga neapolitana (strain ATCC 49049 / DSM 4359 / NBRC 107923 / NS-E).